The primary structure comprises 191 residues: Fe/S biogenesis protein NfuA (191 aa).

2 residues coordinate [4Fe-4S] cluster: Cys149 and Cys152.

This sequence belongs to the NfuA family. In terms of assembly, homodimer. [4Fe-4S] cluster is required as a cofactor.

Functionally, involved in iron-sulfur cluster biogenesis. Binds a 4Fe-4S cluster, can transfer this cluster to apoproteins, and thereby intervenes in the maturation of Fe/S proteins. Could also act as a scaffold/chaperone for damaged Fe/S proteins. The chain is Fe/S biogenesis protein NfuA from Escherichia coli O7:K1 (strain IAI39 / ExPEC).